Reading from the N-terminus, the 510-residue chain is Catalase (510 aa).

Positions M1 to A26 are cleaved as a signal peptide. Residues H78 and N150 contribute to the active site. Y358 provides a ligand contact to heme. Polar residues predominate over residues N386–V400. The disordered stretch occupies residues N386–A412.

This sequence belongs to the catalase family. It depends on heme as a cofactor.

The protein resides in the periplasm. It carries out the reaction 2 H2O2 = O2 + 2 H2O. Decomposes hydrogen peroxide into water and oxygen; serves to protect cells from the toxic effects of hydrogen peroxide. This is Catalase (katB) from Pseudomonas syringae pv. syringae.